Consider the following 428-residue polypeptide: Dihydroorotase (428 aa).

The Zn(2+) site is built by H59 and H61. Residues 61–63 and N93 contribute to the substrate site; that span reads HLR. Zn(2+) contacts are provided by D151, H178, and H231. N277 contacts substrate. Zn(2+) is bound at residue D304. D304 is an active-site residue. Substrate-binding positions include H308 and 322–323; that span reads FG.

Belongs to the metallo-dependent hydrolases superfamily. DHOase family. Class I DHOase subfamily. Zn(2+) serves as cofactor.

It catalyses the reaction (S)-dihydroorotate + H2O = N-carbamoyl-L-aspartate + H(+). Its pathway is pyrimidine metabolism; UMP biosynthesis via de novo pathway; (S)-dihydroorotate from bicarbonate: step 3/3. Catalyzes the reversible cyclization of carbamoyl aspartate to dihydroorotate. The polypeptide is Dihydroorotase (Bacillus cytotoxicus (strain DSM 22905 / CIP 110041 / 391-98 / NVH 391-98)).